Consider the following 460-residue polypeptide: Spermatogenesis-defective protein 39 homolog (460 aa).

Residue threonine 21 is modified to Phosphothreonine. The segment at 70–101 (SIKETAGSSGSTSEGREQMKGRNSFYTQLPKP) is disordered. A compositionally biased stretch (low complexity) spans 73-82 (ETAGSSGSTS). Position 115 is a phosphothreonine (threonine 115). 3 positions are modified to phosphoserine: serine 119, serine 122, and serine 128. Over residues 121–133 (QSLSDALSDTPAK) the composition is skewed to polar residues. The tract at residues 121-141 (QSLSDALSDTPAKTYSPELGR) is disordered. Threonine 130 carries the post-translational modification Phosphothreonine.

This sequence belongs to the SPE39 family. Interacts with VPS33B. Associates with the homotypic fusion and vacuole protein sorting (HOPS) complex; impaired by VPS33B. Interacts with RAB11A.

It localises to the cytoplasm. The protein resides in the cytoplasmic vesicle. Its subcellular location is the early endosome. The protein localises to the recycling endosome. It is found in the late endosome. Its function is as follows. Proposed to be involved in endosomal maturation implicating in part VPS33B. In epithelial cells, the VPS33B:VIPAS39 complex may play a role in the apical RAB11A-dependent recycling pathway and in the maintenance of the apical-basolateral polarity. May play a role in lysosomal trafficking, probably via association with the core HOPS complex in a discrete population of endosomes; the functions seems to be independent of VPS33B. May play a role in vesicular trafficking during spermatogenesis. May be involved in direct or indirect transcriptional regulation of E-cadherin. This Rattus norvegicus (Rat) protein is Spermatogenesis-defective protein 39 homolog (Vipas39).